Here is a 243-residue protein sequence, read N- to C-terminus: UPF0246 protein M6_Spy1787 (243 aa).

This sequence belongs to the UPF0246 family.

This chain is UPF0246 protein M6_Spy1787, found in Streptococcus pyogenes serotype M6 (strain ATCC BAA-946 / MGAS10394).